The following is a 607-amino-acid chain: UvrABC system protein C (607 aa).

A GIY-YIG domain is found at 11 to 89 (CKPGVYRFED…IKEFAPPCNV (79 aa)). The UVR domain occupies 201–236 (SSLLESLKKKMLKASKNKEYEEAAILRDKIQAAQTV).

Belongs to the UvrC family. Interacts with UvrB in an incision complex.

Its subcellular location is the cytoplasm. The UvrABC repair system catalyzes the recognition and processing of DNA lesions. UvrC both incises the 5' and 3' sides of the lesion. The N-terminal half is responsible for the 3' incision and the C-terminal half is responsible for the 5' incision. The sequence is that of UvrABC system protein C from Tropheryma whipplei (strain Twist) (Whipple's bacillus).